Consider the following 138-residue polypeptide: MKRYIALDIGDVRIGVARSDIMGIIASPLETINRKKVKSVKRIAEICKENDTNLVVVGIPKSLDGEEKRQAEKVREYIEKLKKEIENLEIIEVDERFSTVIADNILKELNKNGAIEKRKVVDKVAASIILQTYLDMKK.

Belongs to the YqgF nuclease family.

The protein localises to the cytoplasm. Could be a nuclease involved in processing of the 5'-end of pre-16S rRNA. This chain is Putative pre-16S rRNA nuclease, found in Fusobacterium nucleatum subsp. nucleatum (strain ATCC 25586 / DSM 15643 / BCRC 10681 / CIP 101130 / JCM 8532 / KCTC 2640 / LMG 13131 / VPI 4355).